A 104-amino-acid chain; its full sequence is uncharacterized protein (104 aa).

Positions 42–104 form a coiled coil; it reads ARDSFDQDFE…AREERHKLGR (63 aa).

Belongs to the WXG100 family.

This is an uncharacterized protein from Bacillus subtilis (strain 168).